Reading from the N-terminus, the 251-residue chain is MNLNSIPAFQDNYIWVLTNDEGRCVIVDPGEAAPVLKAIAEHKWMPEAIFLTHHHHDHVGGVKELLQHFPQMTVYGPAETQDKGATHLVGDGDTIRVLGEKFTLFATPGHTLGHVCYFSHPYLFCGDTLFSGGCGRLFEGTPSQMYQSLMKINSLPDDTLICCAHEYTLANIKFALSILPHDSFINEYYRKVKELRVKKQMTLPVILKNERKINLFLRTEDIDLINEINKETILQQPEARFAWLRSKKDTF.

Zn(2+) is bound by residues H53, H55, D57, H58, H110, D127, and H165.

It belongs to the metallo-beta-lactamase superfamily. Glyoxalase II family. As to quaternary structure, monomer. Zn(2+) is required as a cofactor.

It catalyses the reaction an S-(2-hydroxyacyl)glutathione + H2O = a 2-hydroxy carboxylate + glutathione + H(+). It functions in the pathway secondary metabolite metabolism; methylglyoxal degradation; (R)-lactate from methylglyoxal: step 2/2. Thiolesterase that catalyzes the hydrolysis of S-D-lactoyl-glutathione to form glutathione and D-lactic acid. The polypeptide is Hydroxyacylglutathione hydrolase (Salmonella agona (strain SL483)).